Here is a 585-residue protein sequence, read N- to C-terminus: Arginine--tRNA ligase (585 aa).

The 'HIGH' region signature appears at 127–137 (PNTNKPLHVGH).

Belongs to the class-I aminoacyl-tRNA synthetase family. In terms of assembly, monomer.

The protein localises to the cytoplasm. The enzyme catalyses tRNA(Arg) + L-arginine + ATP = L-arginyl-tRNA(Arg) + AMP + diphosphate. This chain is Arginine--tRNA ligase, found in Borrelia garinii subsp. bavariensis (strain ATCC BAA-2496 / DSM 23469 / PBi) (Borreliella bavariensis).